The following is a 149-amino-acid chain: Oligosaccharyltransferase complex subunit OSTC (149 aa).

Residues 1-32 (MESLYRVPFLVLECPNLKLKKPPWVHMPSAMT) lie on the Cytoplasmic side of the membrane. The chain crosses the membrane as a helical span at residues 33-53 (VYALVVVSYFLITGGIIYDVI). The Extracellular portion of the chain corresponds to 54–83 (VEPPSVGSVTDEHGHQRPVAFLAYRVNGQY). The chain crosses the membrane as a helical span at residues 84 to 104 (IMEGLASSFLFTMGGLGFIIL). Over 105-117 (DRSNAPNIPKLNR) the chain is Cytoplasmic. A helical transmembrane segment spans residues 118–138 (FLLLFIGFVCVLLSFFMARVF). Residues 139 to 149 (MRMKLPGYLMG) are Extracellular-facing.

The protein belongs to the OSTC family. In terms of assembly, component of STT3A-containing oligosaccharyl transferase (OST-A) complex. STT3A-containing complex assembly occurs through the formation of 3 subcomplexes. Subcomplex 1 contains RPN1 and TMEM258, subcomplex 2 contains the STT3A-specific subunits STT3A, DC2/OSTC, and KCP2 as well as the core subunit OST4, and subcomplex 3 contains RPN2, DAD1, and OST48. The OST-A complex can form stable complexes with the Sec61 complex or with both the Sec61 and TRAP complexes. Interacts with PSEN1 and NCSTN; indicative for an association with the gamma-secretase complex.

It is found in the endoplasmic reticulum. Its subcellular location is the membrane. It participates in protein modification; protein glycosylation. In terms of biological role, subunit of STT3A-containing oligosaccharyl transferase (OST-A) complex that catalyzes the initial transfer of a defined glycan (Glc(3)Man(9)GlcNAc(2) in eukaryotes) from the lipid carrier dolichol-pyrophosphate to an asparagine residue within an Asn-X-Ser/Thr consensus motif in nascent polypeptide chains, the first step in protein N-glycosylation. N-glycosylation occurs cotranslationally and the complex associates with the Sec61 complex at the channel-forming translocon complex that mediates protein translocation across the endoplasmic reticulum (ER). Within the OST-A complex, acts as an adapter that anchors the OST-A complex to the Sec61 complex. May be involved in N-glycosylation of APP (amyloid-beta precursor protein). Can modulate gamma-secretase cleavage of APP by enhancing endoprotelysis of PSEN1. The sequence is that of Oligosaccharyltransferase complex subunit OSTC from Bos taurus (Bovine).